The sequence spans 225 residues: Chromosome partition protein MukE (225 aa).

The tract at residues 197 to 225 is disordered; the sequence is RDGEAMPIENHLQLNDETEENQPDSGEEE. Positions 212-225 are enriched in acidic residues; it reads DETEENQPDSGEEE.

The protein belongs to the MukE family. As to quaternary structure, interacts, and probably forms a ternary complex, with MukF and MukB. The complex formation is stimulated by calcium or magnesium.

It is found in the cytoplasm. The protein localises to the nucleoid. In terms of biological role, involved in chromosome condensation, segregation and cell cycle progression. May participate in facilitating chromosome segregation by condensation DNA from both sides of a centrally located replisome during cell division. Probably acts via its interaction with MukB and MukF. This Escherichia coli O157:H7 protein is Chromosome partition protein MukE.